The following is a 579-amino-acid chain: ERV-BabFcenv provirus ancestral Env polyprotein (579 aa).

An N-terminal signal peptide occupies residues 1–22 (MISAVLNLPSTPLLPLLWFTLI). The tract at residues 23-387 (IPASLTNPKF…LSSSNNIQKQ (365 aa)) is surface protein. Over 23–523 (IPASLTNPKF…VWLLPVVQQM (501 aa)) the chain is Extracellular. Asn-135, Asn-203, Asn-242, and Asn-251 each carry an N-linked (GlcNAc...) asparagine glycan. A CXXC motif is present at residues 255–258 (CFLC). 3 N-linked (GlcNAc...) asparagine glycosylation sites follow: Asn-276, Asn-312, and Asn-337. Positions 388–408 (AVFLPLIIGVSLASSLVASGL) are fusion peptide. Positions 388 to 579 (AVFLPLIIGV…LPTSDPNYAP (192 aa)) are transmembrane protein. Positions 453–469 (AQNRRALDLLTAEKGGT) match the CKS-17 motif. Cys-470 and Cys-477 are joined by a disulfide. The CX6CC signature appears at 470 to 478 (CLFLGEECC). Asn-482 carries an N-linked (GlcNAc...) asparagine glycan. A helical membrane pass occupies residues 524–544 (LPFLIPILILCLMLCLAPILI). At 545–579 (KFLRARVQEITRVTFNQMLLHPYTQLPTSDPNYAP) the chain is on the cytoplasmic side.

Belongs to the gamma type-C retroviral envelope protein family. HERV class-I F(c)1 env subfamily. Specific enzymatic cleavages in vivo yield the mature SU and TM proteins. Post-translationally, the CXXC motif is highly conserved across a broad range of retroviral envelope proteins. It is thought to participate in the formation of a labile disulfide bond possibly with the CX6CC motif present in the transmembrane domain.

The protein localises to the cell membrane. Its function is as follows. Retroviral envelope proteins mediate receptor recognition and membrane fusion during early infection. Endogenous envelope proteins may have kept, lost or modified their original function during evolution. The protein is ERV-BabFcenv provirus ancestral Env polyprotein of Papio anubis (Olive baboon).